The sequence spans 133 residues: Transcription antitermination protein NusB (133 aa).

It belongs to the NusB family.

Involved in transcription antitermination. Required for transcription of ribosomal RNA (rRNA) genes. Binds specifically to the boxA antiterminator sequence of the ribosomal RNA (rrn) operons. The chain is Transcription antitermination protein NusB from Clostridium novyi (strain NT).